The chain runs to 318 residues: Mediator of RNA polymerase II transcription subunit 3 (318 aa).

Polar residues predominate over residues 134-156 (SAAGITKTSSGNDGNTTGSTANT). A disordered region spans residues 134–225 (SAAGITKTSS…PSLKQIPNTQ (92 aa)). A compositionally biased stretch (low complexity) spans 192 to 217 (HTGPATAPTTSNSAASAAAAAANTPS).

The protein belongs to the Mediator complex subunit 3 family. Component of the Mediator complex.

The protein resides in the nucleus. Its function is as follows. Component of the Mediator complex, a coactivator involved in regulated gene transcription of nearly all RNA polymerase II-dependent genes. Mediator functions as a bridge to convey information from gene-specific regulatory proteins to the basal RNA polymerase II transcription machinery. Mediator is recruited to promoters by direct interactions with regulatory proteins and serves as a scaffold for the assembly of a functional preinitiation complex with RNA polymerase II and the general transcription factors. The polypeptide is Mediator of RNA polymerase II transcription subunit 3 (PGD1) (Kluyveromyces lactis (strain ATCC 8585 / CBS 2359 / DSM 70799 / NBRC 1267 / NRRL Y-1140 / WM37) (Yeast)).